Reading from the N-terminus, the 393-residue chain is NAD(P)H-quinone oxidoreductase subunit H, chloroplastic (393 aa).

It belongs to the complex I 49 kDa subunit family. As to quaternary structure, NDH is composed of at least 16 different subunits, 5 of which are encoded in the nucleus.

It is found in the plastid. Its subcellular location is the chloroplast thylakoid membrane. The catalysed reaction is a plastoquinone + NADH + (n+1) H(+)(in) = a plastoquinol + NAD(+) + n H(+)(out). It carries out the reaction a plastoquinone + NADPH + (n+1) H(+)(in) = a plastoquinol + NADP(+) + n H(+)(out). Functionally, NDH shuttles electrons from NAD(P)H:plastoquinone, via FMN and iron-sulfur (Fe-S) centers, to quinones in the photosynthetic chain and possibly in a chloroplast respiratory chain. The immediate electron acceptor for the enzyme in this species is believed to be plastoquinone. Couples the redox reaction to proton translocation, and thus conserves the redox energy in a proton gradient. In Solanum tuberosum (Potato), this protein is NAD(P)H-quinone oxidoreductase subunit H, chloroplastic.